Consider the following 296-residue polypeptide: Glycine--tRNA ligase alpha subunit (296 aa).

Belongs to the class-II aminoacyl-tRNA synthetase family. Tetramer of two alpha and two beta subunits.

It localises to the cytoplasm. It carries out the reaction tRNA(Gly) + glycine + ATP = glycyl-tRNA(Gly) + AMP + diphosphate. The sequence is that of Glycine--tRNA ligase alpha subunit from Desulfitobacterium hafniense (strain Y51).